A 182-amino-acid polypeptide reads, in one-letter code: Adenine phosphoribosyltransferase (182 aa).

It belongs to the purine/pyrimidine phosphoribosyltransferase family. In terms of assembly, homodimer.

The protein localises to the cytoplasm. It catalyses the reaction AMP + diphosphate = 5-phospho-alpha-D-ribose 1-diphosphate + adenine. Its pathway is purine metabolism; AMP biosynthesis via salvage pathway; AMP from adenine: step 1/1. Its function is as follows. Catalyzes a salvage reaction resulting in the formation of AMP, that is energically less costly than de novo synthesis. This Renibacterium salmoninarum (strain ATCC 33209 / DSM 20767 / JCM 11484 / NBRC 15589 / NCIMB 2235) protein is Adenine phosphoribosyltransferase.